We begin with the raw amino-acid sequence, 148 residues long: Large ribosomal subunit protein bL9 (148 aa).

The protein belongs to the bacterial ribosomal protein bL9 family.

Its function is as follows. Binds to the 23S rRNA. In Thermus thermophilus, this protein is Large ribosomal subunit protein bL9.